Here is a 958-residue protein sequence, read N- to C-terminus: Coiled-coil domain-containing protein 80 (958 aa).

The first 21 residues, 1-21, serve as a signal peptide directing secretion; that stretch reads MNWMPALSLALLWTAWLVCGS. Disordered stretches follow at residues 30–99, 290–335, 358–396, 424–452, and 467–617; these read RGSH…TRTR, VVED…TVRK, TATR…TTTE, ANRR…RYES, and ASMS…QPPR. Residues 358 to 389 are compositionally biased toward low complexity; the sequence is TATRATTRTVTTASRPTTTTTPLPTTQRTWTT. Composition is skewed to basic and acidic residues over residues 425 to 438 and 471 to 487; these read NRRD…EKHL and RFKD…HRDL. Residues 495–506 show a composition bias toward basic residues; it reads KPTKTKPPKKKT. Composition is skewed to basic and acidic residues over residues 547–589 and 597–606; these read KKHE…DKDR and SRTENEDFPK.

This sequence belongs to the CCDC80 family. In terms of assembly, binds to various extracellular matrix proteins.

It is found in the secreted. The protein resides in the extracellular space. The protein localises to the extracellular matrix. Its function is as follows. Promotes cell adhesion and matrix assembly. May play a role in eye formation. The polypeptide is Coiled-coil domain-containing protein 80 (CCDC80) (Gallus gallus (Chicken)).